Consider the following 158-residue polypeptide: 2-C-methyl-D-erythritol 2,4-cyclodiphosphate synthase (158 aa).

A divalent metal cation-binding residues include D9 and H11. Residues 9–11 (DVH) and 35–36 (HS) contribute to the 4-CDP-2-C-methyl-D-erythritol 2-phosphate site. H43 provides a ligand contact to a divalent metal cation. Residues 57–59 (DIG), 62–66 (FPDTD), 101–107 (AQAPKMA), 133–136 (TTTE), F140, and R143 contribute to the 4-CDP-2-C-methyl-D-erythritol 2-phosphate site.

It belongs to the IspF family. In terms of assembly, homotrimer. A divalent metal cation serves as cofactor.

The enzyme catalyses 4-CDP-2-C-methyl-D-erythritol 2-phosphate = 2-C-methyl-D-erythritol 2,4-cyclic diphosphate + CMP. Its pathway is isoprenoid biosynthesis; isopentenyl diphosphate biosynthesis via DXP pathway; isopentenyl diphosphate from 1-deoxy-D-xylulose 5-phosphate: step 4/6. Involved in the biosynthesis of isopentenyl diphosphate (IPP) and dimethylallyl diphosphate (DMAPP), two major building blocks of isoprenoid compounds. Catalyzes the conversion of 4-diphosphocytidyl-2-C-methyl-D-erythritol 2-phosphate (CDP-ME2P) to 2-C-methyl-D-erythritol 2,4-cyclodiphosphate (ME-CPP) with a corresponding release of cytidine 5-monophosphate (CMP). The protein is 2-C-methyl-D-erythritol 2,4-cyclodiphosphate synthase of Vibrio vulnificus (strain CMCP6).